The chain runs to 253 residues: Tryptophan synthase alpha chain (253 aa).

Residues E45 and D56 each act as proton acceptor in the active site.

This sequence belongs to the TrpA family. Tetramer of two alpha and two beta chains.

It catalyses the reaction (1S,2R)-1-C-(indol-3-yl)glycerol 3-phosphate + L-serine = D-glyceraldehyde 3-phosphate + L-tryptophan + H2O. Its pathway is amino-acid biosynthesis; L-tryptophan biosynthesis; L-tryptophan from chorismate: step 5/5. In terms of biological role, the alpha subunit is responsible for the aldol cleavage of indoleglycerol phosphate to indole and glyceraldehyde 3-phosphate. In Flavobacterium johnsoniae (strain ATCC 17061 / DSM 2064 / JCM 8514 / BCRC 14874 / CCUG 350202 / NBRC 14942 / NCIMB 11054 / UW101) (Cytophaga johnsonae), this protein is Tryptophan synthase alpha chain.